A 204-amino-acid polypeptide reads, in one-letter code: Cysteine-rich protein 3 (204 aa).

In terms of domain architecture, LIM zinc-binding 1 spans 3–64 (WTCPRCQQPV…KPCYGALFGP (62 aa)). The interval 88-107 (ISLSPSNFSPPRPRTGLSRA) is disordered. The region spanning 122–183 (SLCPGCGDPV…IPCYGYLFGP (62 aa)) is the LIM zinc-binding 2 domain.

Expressed specifically by the thymus.

The protein localises to the cytoplasm. The sequence is that of Cysteine-rich protein 3 (Crip3) from Mus musculus (Mouse).